Consider the following 393-residue polypeptide: Phosphoglycerate kinase (393 aa).

Residues 21–23 (DFN), R37, 60–63 (HLGR), R119, and R152 contribute to the substrate site. Residues K202, G291, E322, and 348–351 (GGDT) each bind ATP.

It belongs to the phosphoglycerate kinase family. Monomer.

The protein localises to the cytoplasm. It catalyses the reaction (2R)-3-phosphoglycerate + ATP = (2R)-3-phospho-glyceroyl phosphate + ADP. It participates in carbohydrate degradation; glycolysis; pyruvate from D-glyceraldehyde 3-phosphate: step 2/5. The protein is Phosphoglycerate kinase of Coprothermobacter proteolyticus (strain ATCC 35245 / DSM 5265 / OCM 4 / BT).